The sequence spans 342 residues: Methionyl-tRNA formyltransferase (342 aa).

Ser108 to Pro111 contacts (6S)-5,6,7,8-tetrahydrofolate.

The protein belongs to the Fmt family.

It carries out the reaction L-methionyl-tRNA(fMet) + (6R)-10-formyltetrahydrofolate = N-formyl-L-methionyl-tRNA(fMet) + (6S)-5,6,7,8-tetrahydrofolate + H(+). Its function is as follows. Attaches a formyl group to the free amino group of methionyl-tRNA(fMet). The formyl group appears to play a dual role in the initiator identity of N-formylmethionyl-tRNA by promoting its recognition by IF2 and preventing the misappropriation of this tRNA by the elongation apparatus. The chain is Methionyl-tRNA formyltransferase from Prochlorococcus marinus (strain MIT 9303).